The chain runs to 409 residues: N-acetylglucosamine-6-phosphate deacetylase (409 aa).

Glu143 provides a ligand contact to a divalent metal cation. Ala154 to His155 contacts substrate. A divalent metal cation is bound by residues His211 and His232. Substrate is bound by residues Asn235 to Ala236, Arg243, and Asp269 to His272. The Proton donor/acceptor role is filled by Asp294. Leu328–Gly330 lines the substrate pocket.

This sequence belongs to the metallo-dependent hydrolases superfamily. NagA family. A divalent metal cation serves as cofactor.

The enzyme catalyses N-acetyl-D-glucosamine 6-phosphate + H2O = D-glucosamine 6-phosphate + acetate. It functions in the pathway amino-sugar metabolism; N-acetylneuraminate degradation. Hydrolyzes the N-glycolyl group from N-glycolylglucosamine 6-phosphate (GlcNGc-6-P) in the N-glycolylneuraminic acid (Neu5Gc) degradation pathway. This chain is N-acetylglucosamine-6-phosphate deacetylase (AMDHD2), found in Bos taurus (Bovine).